The sequence spans 802 residues: Receptor-type tyrosine-protein phosphatase alpha (802 aa).

An N-terminal signal peptide occupies residues 1-19 (MDSWFILVLLGSGLICVSA). Over 20–151 (NNATTVAPSV…DSKDRRDETP (132 aa)) the chain is Extracellular. Residues Asn21 and Asn36 are each glycosylated (N-linked (GlcNAc...) asparagine). The segment at 39-59 (TAEPVKEEAKTSNPTSSLTSL) is disordered. 5 N-linked (GlcNAc...) asparagine glycosylation sites follow: Asn68, Asn80, Asn86, Asn104, and Asn124. Polar residues-rich tracts occupy residues 79 to 115 (VNSS…QFTD) and 123 to 141 (GNSS…SGNS). The interval 79–146 (VNSSDSDNGT…PSGNSDSKDR (68 aa)) is disordered. A helical membrane pass occupies residues 152–174 (IIAVMVALSSLLVIVFIIIVLYM). The Cytoplasmic segment spans residues 175 to 802 (LRFKKYKQAG…DAFSDYANFK (628 aa)). Phosphoserine occurs at positions 211 and 213. Tyrosine-protein phosphatase domains are found at residues 241 to 501 (FREE…LLEH) and 533 to 791 (LEEE…VQEY). Substrate contacts are provided by residues Asp410, 442–448 (CSAGVGR), and Gln486. Cys442 (phosphocysteine intermediate) is an active-site residue. The Phosphocysteine intermediate role is filled by Cys732. Tyr798 carries the phosphotyrosine modification.

This sequence belongs to the protein-tyrosine phosphatase family. Receptor class 4 subfamily. In terms of assembly, part of a complex comprised of PTPRA, BCAR1, BCAR3 (via SH2 domain), and SRC. Within the complex, interacts (when phosphorylated on Tyr-798) with BCAR3 (via SH2 domain). Interacts with GRB2. In terms of processing, integrin binding to extracellular matrix induces phosphorylation at Tyr-798 which induces PTPRA localization and recruitment of BCAR3, BCAR1 and CRK to focal adhesions.

It localises to the cell membrane. The protein localises to the cell junction. It is found in the focal adhesion. It catalyses the reaction O-phospho-L-tyrosyl-[protein] + H2O = L-tyrosyl-[protein] + phosphate. Tyrosine protein phosphatase which is involved in integrin-mediated focal adhesion formation. Following integrin engagement, specifically recruits BCAR3, BCAR1 and CRK to focal adhesions thereby promoting SRC-mediated phosphorylation of BRAC1 and the subsequent activation of PAK and small GTPase RAC1 and CDC42. This Homo sapiens (Human) protein is Receptor-type tyrosine-protein phosphatase alpha (PTPRA).